The sequence spans 372 residues: Ligninase LG3 (372 aa).

The signal sequence occupies residues 1 to 21 (MAFKQLFAAISLALSLSAANA). Residues 22–28 (AAVIEKR) constitute a propeptide that is removed on maturation. 2 disulfide bridges follow: Cys31–Cys43 and Cys62–Cys148. The Proton acceptor role is filled by His75. Residues Asp76, Gly94, Asp96, and Ser98 each contribute to the Ca(2+) site. His204 contacts heme b. Ca(2+) contacts are provided by Ser205, Asp222, Thr224, Ile227, and Asp229. An intrachain disulfide couples Cys277 to Cys345. N-linked (GlcNAc...) asparagine glycosylation occurs at Asn285. A compositionally biased stretch (low complexity) spans 350 to 361 (FPTLTTLPGPET). The segment at 350–372 (FPTLTTLPGPETSVQRIPPPPGA) is disordered.

It belongs to the peroxidase family. Ligninase subfamily. It depends on heme b as a cofactor. Requires Ca(2+) as cofactor.

The enzyme catalyses 1-(3,4-dimethoxyphenyl)-2-(2-methoxyphenoxy)propane-1,3-diol + H2O2 = 3,4-dimethoxybenzaldehyde + guaiacol + glycolaldehyde + H2O. The catalysed reaction is 2 (3,4-dimethoxyphenyl)methanol + H2O2 = 2 (3,4-dimethoxyphenyl)methanol radical + 2 H2O. It participates in secondary metabolite metabolism; lignin degradation. In terms of biological role, depolymerization of lignin. Catalyzes the C(alpha)-C(beta) cleavage of the propyl side chains of lignin. This Phanerodontia chrysosporium (White-rot fungus) protein is Ligninase LG3 (GLG3).